A 152-amino-acid chain; its full sequence is 3-dehydroquinate dehydratase (152 aa).

The active-site Proton acceptor is the Y26. Residues N77, H83, and D90 each contribute to the substrate site. H103 (proton donor) is an active-site residue. Residues 104-105 and R114 each bind substrate; that span reads LS.

This sequence belongs to the type-II 3-dehydroquinase family. As to quaternary structure, homododecamer.

It catalyses the reaction 3-dehydroquinate = 3-dehydroshikimate + H2O. Its pathway is metabolic intermediate biosynthesis; chorismate biosynthesis; chorismate from D-erythrose 4-phosphate and phosphoenolpyruvate: step 3/7. In terms of biological role, catalyzes a trans-dehydration via an enolate intermediate. This Synechocystis sp. (strain ATCC 27184 / PCC 6803 / Kazusa) protein is 3-dehydroquinate dehydratase (aroQ).